The sequence spans 335 residues: Taste receptor type 2 member 119 (335 aa).

Over 1 to 7 (MMEGHIL) the chain is Extracellular. A helical membrane pass occupies residues 8 to 28 (FFFLVVMVQFVTGVLANGLIV). Topologically, residues 29–43 (VVHAIDLIMWKKMAP) are cytoplasmic. Residues 44–64 (LDLLLFCLATSRIILQLCILF) traverse the membrane as a helical segment. Over 65-81 (AQLCLFSLVRHTLFEDN) the chain is Extracellular. The N-linked (GlcNAc...) asparagine glycan is linked to Asn81. A helical transmembrane segment spans residues 82–102 (ITFVFIINELSLWFATWLGVF). Topologically, residues 103 to 124 (YCAKIATIPHPLFLWLKMRISR) are cytoplasmic. The helical transmembrane segment at 125-145 (LVPWLILGSVLYVIITTFIHS) threads the bilayer. Topologically, residues 146-176 (RETSAILKPIFISLFPKNATQVGTGHATLLS) are extracellular. N-linked (GlcNAc...) asparagine glycosylation is present at Asn163. A helical membrane pass occupies residues 177–197 (VLVLGLTLPLFIFTVAVLLLI). Over 198–224 (YSLWNYSRQMRTMVGTREYSGHAHISA) the chain is Cytoplasmic. A helical transmembrane segment spans residues 225 to 245 (MLSILSFLILYLSHYMVAVLI). Over 246-256 (STQVLYLGSRT) the chain is Extracellular. The helical transmembrane segment at 257–277 (FVFCLLVIGMYPSIHSIVLIL) threads the bilayer. The Cytoplasmic segment spans residues 278-335 (GNPKLKRNAKMFIVHCKCCHCTRAWVTSRSPRLSDLPVPPTHPSANKTSCSEACIMPS). Residues 308–327 (PRLSDLPVPPTHPSANKTSC) are disordered.

Belongs to the G-protein coupled receptor T2R family. Expressed in subsets of taste receptor cells of the tongue and palate epithelium and exclusively in gustducin-positive cells. Expressed in the duodenum, antrum and fundus (part of the stomach).

It is found in the membrane. Functionally, gustducin-coupled receptor implicated in the perception of bitter compounds in the oral cavity and the gastrointestinal tract. Signals through PLCB2 and the calcium-regulated cation channel TRPM5. This is Taste receptor type 2 member 119 (Tas2r119) from Rattus norvegicus (Rat).